We begin with the raw amino-acid sequence, 558 residues long: Alpha-1,3-mannosyltransferase MNT2 (558 aa).

The Cytoplasmic portion of the chain corresponds to 1–6 (MRRKNR). Residues 7 to 27 (LFILVVLLGIVLVVYYSQLNS) traverse the membrane as a helical; Signal-anchor for type II membrane protein segment. The Lumenal segment spans residues 28–558 (LDLVEPVQSS…QIVDIWNKDI (531 aa)). A glycan (N-linked (GlcNAc...) asparagine) is linked at Asn-187.

Belongs to the MNN1/MNT family.

The protein localises to the golgi apparatus membrane. It functions in the pathway protein modification; protein glycosylation. Mannosyltransferase involved in adding the 4th and 5th mannose residues of O-linked glycans. This is Alpha-1,3-mannosyltransferase MNT2 (MNT2) from Saccharomyces cerevisiae (strain ATCC 204508 / S288c) (Baker's yeast).